An 80-amino-acid chain; its full sequence is Peptide LaIT2 (80 aa).

The signal sequence occupies residues 1–21 (MAKHLIVMFLVIMVISSLVDC). Positions 49–80 (QYGCPIISNMCEDHCRRKKMEGQCDLLDCVCS) constitute a BetaSPN-type CS-alpha/beta domain. Intrachain disulfides connect Cys52/Cys72, Cys59/Cys77, and Cys63/Cys79.

This sequence belongs to the long chain scorpion toxin family. Class 2 subfamily. In terms of tissue distribution, expressed by the venom gland.

It localises to the secreted. Functionally, dual-function toxin that acts both as an insecticidal and an antimicrobial peptide. May inhibit voltage-gated potassium channels (Kv). This amphipathic peptide causes significant antimicrobial activity against E.coli (MIC=7 uM) but does not show any activity against S.aureus even at high concentration. In vivo, causes paralysis or death to crickets. This is Peptide LaIT2 from Liocheles australasiae (Dwarf wood scorpion).